A 232-amino-acid polypeptide reads, in one-letter code: Aspartate/glutamate leucyltransferase (232 aa).

It belongs to the R-transferase family. Bpt subfamily.

The protein resides in the cytoplasm. The catalysed reaction is N-terminal L-glutamyl-[protein] + L-leucyl-tRNA(Leu) = N-terminal L-leucyl-L-glutamyl-[protein] + tRNA(Leu) + H(+). The enzyme catalyses N-terminal L-aspartyl-[protein] + L-leucyl-tRNA(Leu) = N-terminal L-leucyl-L-aspartyl-[protein] + tRNA(Leu) + H(+). Its function is as follows. Functions in the N-end rule pathway of protein degradation where it conjugates Leu from its aminoacyl-tRNA to the N-termini of proteins containing an N-terminal aspartate or glutamate. This is Aspartate/glutamate leucyltransferase from Vibrio vulnificus (strain YJ016).